The following is a 354-amino-acid chain: UDP-galactose transporter homolog 1 (354 aa).

The next 5 helical transmembrane spans lie at 6 to 26, 54 to 74, 95 to 112, 123 to 143, and 148 to 168; these read GGSIITLAACILGLYASFLTW, LVINIIQAFFASIVGLIYSVV, FFKSFVIISLTSSLSSPL, LAYLLAKSCKLIPVMLVHFVL, and FPLYKCMVAGSVTVGVIIFTL. Asparagine 202 carries N-linked (GlcNAc...) asparagine glycosylation. A run of 4 helical transmembrane segments spans residues 227 to 247, 268 to 288, 295 to 317, and 321 to 340; these read YLMCILNAFIFINTLAYALIF, MNILEFAILGSVGQVFVFIIL, ILITSTVTRKMISMILSVVLFGH, and GLQWGGVGLVFGGIGYEALV.

The protein belongs to the nucleotide-sugar transporter family. SLC35B subfamily.

The protein resides in the endoplasmic reticulum membrane. In terms of biological role, may be involved in specific transport of UDP-Gal from the cytosol to the Golgi lumen. Involved in the maintenance of optimal conditions for the folding of secretory pathway proteins in the endoplasmic reticulum. The polypeptide is UDP-galactose transporter homolog 1 (HUT1) (Debaryomyces hansenii (strain ATCC 36239 / CBS 767 / BCRC 21394 / JCM 1990 / NBRC 0083 / IGC 2968) (Yeast)).